A 296-amino-acid polypeptide reads, in one-letter code: Cytochrome bc1 complex cytochrome c subunit (296 aa).

The segment covering 1-19 (MMETNPQTSEGAGKAQSSA) has biased composition (polar residues). Residues 1 to 27 (MMETNPQTSEGAGKAQSSAKKVKNRRK) form a disordered region. A helical transmembrane segment spans residues 32–52 (VAGAMALTIGLSGAGILATAI). 2 Cytochrome c domains span residues 67 to 147 (ALIA…AANG) and 177 to 255 (LDVS…KSTK). Positions 80, 83, 84, 190, 193, and 194 each coordinate heme c. A helical membrane pass occupies residues 274–294 (GLFMWGIGIMVLIAAAMWIGS).

In terms of assembly, the cytochrome bc1 complex is composed of a cytochrome b (QcrB), the Rieske iron-sulfur protein (QcrA) and a diheme cytochrome c (QcrC) subunit. The bc1 complex forms a supercomplex with cytochrome c oxidase (cytochrome aa3). In terms of processing, binds 2 heme c groups covalently per subunit.

It is found in the cell membrane. It catalyses the reaction a quinol + 2 Fe(III)-[cytochrome c](out) = a quinone + 2 Fe(II)-[cytochrome c](out) + 2 H(+)(out). Its function is as follows. Cytochrome c1 subunit of the cytochrome bc1 complex, an essential component of the respiratory electron transport chain required for ATP synthesis. The bc1 complex catalyzes the oxidation of menaquinol and the reduction of cytochrome c in the respiratory chain. The bc1 complex operates through a Q-cycle mechanism that couples electron transfer to generation of the proton gradient that drives ATP synthesis. In Corynebacterium efficiens (strain DSM 44549 / YS-314 / AJ 12310 / JCM 11189 / NBRC 100395), this protein is Cytochrome bc1 complex cytochrome c subunit (qcrC).